Consider the following 455-residue polypeptide: L-serine dehydratase (455 aa).

This sequence belongs to the iron-sulfur dependent L-serine dehydratase family. [4Fe-4S] cluster serves as cofactor.

The catalysed reaction is L-serine = pyruvate + NH4(+). It participates in carbohydrate biosynthesis; gluconeogenesis. This Haemophilus influenzae (strain ATCC 51907 / DSM 11121 / KW20 / Rd) protein is L-serine dehydratase (sdaA).